Reading from the N-terminus, the 60-residue chain is UPF0434 protein Ent638_1436 (60 aa).

The protein belongs to the UPF0434 family.

In Enterobacter sp. (strain 638), this protein is UPF0434 protein Ent638_1436.